The chain runs to 178 residues: Sec-independent protein translocase protein TatB (178 aa).

The chain crosses the membrane as a helical span at residues 2–22 (LPEIGAAELLIIAAVALIVVG). Residues 104-178 (HSPTGYENTV…KARKTAGSAE (75 aa)) form a disordered region. Pro residues predominate over residues 114 to 131 (EPPPPEPEPQPAAEPAPK). Positions 141 to 154 (PKAAAAPKAAAKPK) are enriched in low complexity.

It belongs to the TatB family. The Tat system comprises two distinct complexes: a TatABC complex, containing multiple copies of TatA, TatB and TatC subunits, and a separate TatA complex, containing only TatA subunits. Substrates initially bind to the TatABC complex, which probably triggers association of the separate TatA complex to form the active translocon.

The protein resides in the cell inner membrane. Part of the twin-arginine translocation (Tat) system that transports large folded proteins containing a characteristic twin-arginine motif in their signal peptide across membranes. Together with TatC, TatB is part of a receptor directly interacting with Tat signal peptides. TatB may form an oligomeric binding site that transiently accommodates folded Tat precursor proteins before their translocation. The chain is Sec-independent protein translocase protein TatB from Phenylobacterium zucineum (strain HLK1).